Here is a 514-residue protein sequence, read N- to C-terminus: Nitric oxide reductase transcription regulator NorR1 (514 aa).

At D54 the chain carries 4-aspartylphosphate. The region spanning 187-416 (IIGQSQAIAG…LEHVISRAAL (230 aa)) is the Sigma-54 factor interaction domain. ATP is bound by residues 215 to 222 (GETGVGKE) and 287 to 296 (EVGELPLSIQ). Residues 490 to 509 (WAKAARQLGMDASNLHKLAK) constitute a DNA-binding region (H-T-H motif).

It functions in the pathway nitrogen metabolism; nitrate reduction (denitrification) [regulation]. In terms of biological role, required for the nitric oxide (NO) induced expression of NO reductase. Not required for expression of 2 other pathway members, nitrate reductase (nirS) and nitrous oxide reductase (nosZ). This chain is Nitric oxide reductase transcription regulator NorR1 (norR1), found in Cupriavidus necator (strain ATCC 17699 / DSM 428 / KCTC 22496 / NCIMB 10442 / H16 / Stanier 337) (Ralstonia eutropha).